Here is a 412-residue protein sequence, read N- to C-terminus: UPF0761 membrane protein LPC_2650 (412 aa).

6 helical membrane-spanning segments follow: residues 36 to 56 (ALAF…LAIF), 99 to 119 (LSIW…FTIE), 137 to 157 (AFLL…LSLA), 177 to 197 (ILHY…YVVV), 210 to 230 (GGLV…YYLI), and 241 to 261 (AFAT…ITLL).

It belongs to the UPF0761 family.

Its subcellular location is the cell inner membrane. The sequence is that of UPF0761 membrane protein LPC_2650 from Legionella pneumophila (strain Corby).